The primary structure comprises 167 residues: Protein-export protein SecB (167 aa).

It belongs to the SecB family. As to quaternary structure, homotetramer, a dimer of dimers. One homotetramer interacts with 1 SecA dimer.

It is found in the cytoplasm. In terms of biological role, one of the proteins required for the normal export of preproteins out of the cell cytoplasm. It is a molecular chaperone that binds to a subset of precursor proteins, maintaining them in a translocation-competent state. It also specifically binds to its receptor SecA. This is Protein-export protein SecB from Cellvibrio japonicus (strain Ueda107) (Pseudomonas fluorescens subsp. cellulosa).